A 202-amino-acid polypeptide reads, in one-letter code: Small ribosomal subunit protein uS4 (202 aa).

A disordered region spans residues 22–43 (TRKSARRAYPPGQHGQNRKKRS). The S4 RNA-binding domain occupies 90-152 (MRLDNTVFRL…APSRKLVENN (63 aa)).

Belongs to the universal ribosomal protein uS4 family. In terms of assembly, part of the 30S ribosomal subunit. Contacts protein S5. The interaction surface between S4 and S5 is involved in control of translational fidelity.

In terms of biological role, one of the primary rRNA binding proteins, it binds directly to 16S rRNA where it nucleates assembly of the body of the 30S subunit. Its function is as follows. With S5 and S12 plays an important role in translational accuracy. The polypeptide is Small ribosomal subunit protein uS4 (Nostoc sp. (strain PCC 7120 / SAG 25.82 / UTEX 2576)).